The chain runs to 796 residues: Polyribonucleotide nucleotidyltransferase (796 aa).

Positions 490 and 496 each coordinate Mg(2+). A KH domain is found at 557-616 (PRIESIFINKDKIRNVIGSGGKNIRDICEKTGAKIEIIQDGTVMIYAVNNEAVEYAKSMI). The S1 motif domain occupies 626–693 (GKVFEGTVVE…DREHVQLSMR (68 aa)). The segment covering 714–736 (SFSDDSSSSGTSSSGSSFKESYS) has biased composition (low complexity). Residues 714 to 796 (SFSDDSSSSG…HEVPRKPRFF (83 aa)) are disordered. Basic residues predominate over residues 740–755 (HGSHEKRRSGGSRSSR). Positions 771-784 (SDFGNNNRSFSNSR) are enriched in low complexity. Residues 785–796 (NGHEVPRKPRFF) show a composition bias toward basic and acidic residues.

It belongs to the polyribonucleotide nucleotidyltransferase family. The cofactor is Mg(2+).

The protein resides in the cytoplasm. The enzyme catalyses RNA(n+1) + phosphate = RNA(n) + a ribonucleoside 5'-diphosphate. Its function is as follows. Involved in mRNA degradation. Catalyzes the phosphorolysis of single-stranded polyribonucleotides processively in the 3'- to 5'-direction. The sequence is that of Polyribonucleotide nucleotidyltransferase from Ehrlichia canis (strain Jake).